A 953-amino-acid chain; its full sequence is Atromentin synthetase invA2 (953 aa).

Residues 38–460 are adenylation (A) domain; the sequence is RAVSQYPNHE…SGRIKDTVIV (423 aa). In terms of domain architecture, Carrier spans 592–670; that stretch reads APSTETEKTL…SLAKYVDSLI (79 aa). The thiolation and peptide carrier (T) domain stretch occupies residues 597–667; that stretch reads TEKTLAGIYA…VISSLAKYVD (71 aa). Ser-629 carries the post-translational modification O-(pantetheine 4'-phosphoryl)serine. The interval 693-795 is thioesterase (TE) domain; sequence PIFMVHPGVG…FTGLINIPPH (103 aa).

It belongs to the ATP-dependent AMP-binding enzyme family.

Its pathway is secondary metabolite biosynthesis. An L-tyrosine:2-oxoglutarate aminotransferase (probably invD) and atromentin synthetase invA2 catalyze consecutive steps to turn over L-tyrosine into atromentin, which represents the generic precursor molecule for the entire terphenylquinone and pulvinic acid family of pigments, which are widely distributed secondary metabolites in homobasidiomycetes. The first step catalyzed by the aminotransferase converts L-tyrosine in to 4-hydroxyphenylpyruvate (4-HPP). Adenylation of two 4-HPP monomers by the invA2 adenylation (A) domain, covalent tethering of the monomers as a thioester and oxoester onto the invA2 thiolation (T) and thioesterase (TE) domains, respectively, and symmetric C-C-bond formation between two monomers catalyzed by the invA2 TE domain leads to atromentin. The polypeptide is Atromentin synthetase invA2 (invA2) (Paxillus involutus (Naked brimcap)).